A 540-amino-acid chain; its full sequence is Glucose-6-phosphate isomerase (540 aa).

The Proton donor role is filled by Glu346. Catalysis depends on residues His377 and Lys505.

Belongs to the GPI family.

It localises to the cytoplasm. It catalyses the reaction alpha-D-glucose 6-phosphate = beta-D-fructose 6-phosphate. Its pathway is carbohydrate biosynthesis; gluconeogenesis. It functions in the pathway carbohydrate degradation; glycolysis; D-glyceraldehyde 3-phosphate and glycerone phosphate from D-glucose: step 2/4. Catalyzes the reversible isomerization of glucose-6-phosphate to fructose-6-phosphate. The protein is Glucose-6-phosphate isomerase of Francisella tularensis subsp. tularensis (strain WY96-3418).